Reading from the N-terminus, the 300-residue chain is 33 kDa chaperonin (300 aa).

2 cysteine pairs are disulfide-bonded: C235–C237 and C269–C272.

It belongs to the HSP33 family. Post-translationally, under oxidizing conditions two disulfide bonds are formed involving the reactive cysteines. Under reducing conditions zinc is bound to the reactive cysteines and the protein is inactive.

It localises to the cytoplasm. Functionally, redox regulated molecular chaperone. Protects both thermally unfolding and oxidatively damaged proteins from irreversible aggregation. Plays an important role in the bacterial defense system toward oxidative stress. The protein is 33 kDa chaperonin of Pseudomonas syringae pv. syringae (strain B728a).